We begin with the raw amino-acid sequence, 410 residues long: Regulator of microtubule dynamics protein 2 (410 aa).

Residues 10-27 (ILGIVVGTAGISLLLLWY) traverse the membrane as a helical segment. Residues 71-109 (RQLQILEKLNELLTHMEELKEEIRVLKEAIPKLEEYIQG) adopt a coiled-coil conformation. A Phosphoserine modification is found at S121. Residues 122–131 (PQHRARKRRL) show a composition bias toward basic residues. The interval 122–153 (PQHRARKRRLATVQSSATSNSSEEAESEGGYV) is disordered. The residue at position 139 (T139) is a Phosphothreonine. The residue at position 152 (Y152) is a Phosphotyrosine. A phosphothreonine mark is found at T154 and T157.

The protein belongs to the RMDN family. As to quaternary structure, interacts with microtubules.

Its subcellular location is the membrane. It localises to the cytoplasm. The protein localises to the cytoskeleton. It is found in the spindle. The protein resides in the spindle pole. This is Regulator of microtubule dynamics protein 2 (RMDN2) from Bos taurus (Bovine).